The following is a 58-amino-acid chain: UPF0391 membrane protein OCAR_5266/OCA5_c27040 (58 aa).

2 consecutive transmembrane segments (helical) span residues 4–24 and 30–50; these read WVVT…GGIA and IAKI…VVGL.

It belongs to the UPF0391 family.

The protein resides in the cell membrane. The protein is UPF0391 membrane protein OCAR_5266/OCA5_c27040 of Afipia carboxidovorans (strain ATCC 49405 / DSM 1227 / KCTC 32145 / OM5) (Oligotropha carboxidovorans).